A 626-amino-acid chain; its full sequence is UvrABC system protein C (626 aa).

One can recognise a GIY-YIG domain in the interval 26–105; sequence PEPGVYFMRD…IKQHQPHFNV (80 aa). The UVR domain occupies 215–250; that stretch reads SELINTLSLQMEQAAEDLNFEQAARLRDQIKGLQGL.

The protein belongs to the UvrC family. As to quaternary structure, interacts with UvrB in an incision complex.

The protein localises to the cytoplasm. Functionally, the UvrABC repair system catalyzes the recognition and processing of DNA lesions. UvrC both incises the 5' and 3' sides of the lesion. The N-terminal half is responsible for the 3' incision and the C-terminal half is responsible for the 5' incision. This is UvrABC system protein C from Acaryochloris marina (strain MBIC 11017).